The following is a 763-amino-acid chain: Leucine-rich repeat and WD repeat-containing protein 1 (763 aa).

LRR repeat units follow at residues 22 to 43 (QIKTLNLSRMSLKSEDLPVPLL), 48 to 69 (RLEKLDLSGNMLQKIPKGLRLP), 70 to 91 (CLKILNCSNNDMEDVLSLEALT), and 92 to 113 (NLEELRLEDNLYLTVNDEHKVI). The tract at residues 206–372 (LTSSEEEERV…KTTKAKLQVP (167 aa)) is disordered. S270 carries the post-translational modification Phosphoserine. Over residues 277 to 288 (VLNTPQKTQPVV) the composition is skewed to polar residues. At T280 the chain carries Phosphothreonine. S290 bears the Phosphoserine mark. A compositionally biased stretch (polar residues) spans 313-325 (LENVTQKAASQTE). 4 WD repeats span residues 499–539 (VSRR…QDYN), 608–647 (NNYRTIDGLSFLSDDVVASKSHMQGSIYLWSWSATRASWN), 653–704 (VPAV…MENF), and 729–763 (LEGPSINSTAMDPGLHYLVALTDKNMVVVWKRESH).

Belongs to the LRWD1 family. In terms of assembly, component of the ORC complex.

The protein localises to the nucleus. It localises to the chromosome. It is found in the centromere. Its subcellular location is the telomere. The protein resides in the cytoplasm. The protein localises to the cytoskeleton. It localises to the microtubule organizing center. It is found in the centrosome. Its subcellular location is the kinetochore. Its function is as follows. Required for G1/S transition. Recruits and stabilizes the origin recognition complex (ORC) onto chromatin during G1 to establish pre-replication complex (preRC) and to heterochromatic sites in post-replicated cells. Binds a combination of DNA and histone methylation repressive marks on heterochromatin. Required for silencing of major satellite repeats. May be important ORC2, ORC3 and ORC4 stability. In Danio rerio (Zebrafish), this protein is Leucine-rich repeat and WD repeat-containing protein 1 (lrwd1).